We begin with the raw amino-acid sequence, 310 residues long: Ribosomal RNA small subunit methyltransferase H (310 aa).

S-adenosyl-L-methionine is bound by residues 33–35 (AGH), aspartate 53, tyrosine 83, aspartate 100, and glutamine 107.

Belongs to the methyltransferase superfamily. RsmH family.

Its subcellular location is the cytoplasm. It carries out the reaction cytidine(1402) in 16S rRNA + S-adenosyl-L-methionine = N(4)-methylcytidine(1402) in 16S rRNA + S-adenosyl-L-homocysteine + H(+). Functionally, specifically methylates the N4 position of cytidine in position 1402 (C1402) of 16S rRNA. The chain is Ribosomal RNA small subunit methyltransferase H from Clostridium perfringens (strain ATCC 13124 / DSM 756 / JCM 1290 / NCIMB 6125 / NCTC 8237 / Type A).